The sequence spans 216 residues: N-acetyltransferase 9-like protein (216 aa).

In terms of domain architecture, N-acetyltransferase spans 68 to 215 (VLLNENDEAK…DHVELELMRT (148 aa)).

Belongs to the acetyltransferase family. GNAT subfamily.

It is found in the cytoplasm. The protein localises to the nucleus. This chain is N-acetyltransferase 9-like protein, found in Schizosaccharomyces pombe (strain 972 / ATCC 24843) (Fission yeast).